Here is a 691-residue protein sequence, read N- to C-terminus: MRDPAFPGAAMAYHPFHAPRPADFPMSAFLAAAQPSFFPALTLPPAALGKPLSDPSLAGAAEAGLHLSALGHHHQAAHLRSLKSLEPEEEVDDDPKVNLEAKELWDQFHKIGTEMVITKSGRRMFPPFKVRVSGLDKKAKYILLMDIVAADDCRYKFHNSRWMVAGKADPEMPKRMYIHPDSPATGEQWMAKPVAFHKLKLTNNISDKHGFTILNSMHKYQPRFHIVRANDILKLPYSTFRTYVFPETDFIAVTAYQNDKITQLKIDHNPFAKGFRDTGNGRREKRKQLSLPSLRMYEEQCKADRDGAESDASSCDPAPGRDSLHSPLSAAPSPLRLHRTNREEKFGADSDQELDRREVRSARGHSPVGHRSPPSSPRLEDRGKDKSTPEKKSDSPESRKDGGSGGDSLFNSIRSLEKDKVESRRKEDSKSDPECGSLSKETYSPLMVQTESPPHLSASHLQSLAFSGLHGQQFFNPLNAGQPLFFHPGQFTMGPGAFSAMGMGHLLASMTGAGALDNGSLSSVQGASGAATPFPFHLSQHMLASQGIPMPAFGGLFPYPYTYMAAAAAAASAMPATSAATTMPRNPFLSSTRPRLRFNPYQIPVGIPPCSNLLTTGMPGSINPGSESSKPGSSRESSPIPDTPGHKRSHSKSLSPKASMKDSINELQRIQRLVSGLERQREVSPGRESPK.

Residues leucine 104 to aspartate 277 constitute a DNA-binding region (T-box). Disordered regions lie at residues cysteine 301–lysine 440 and asparagine 612–lysine 691. Positions histidine 325–leucine 335 are enriched in low complexity. Basic and acidic residues-rich tracts occupy residues threonine 340–serine 361, arginine 378–glycine 402, and serine 415–proline 433. Residues proline 624–proline 639 are compositionally biased toward low complexity. Positions serine 659–serine 684 form a coiled coil. The span at glutamate 678 to lysine 691 shows a compositional bias: basic and acidic residues.

In terms of assembly, binds DNA as a monomer.

Its subcellular location is the nucleus. Its function is as follows. Transcription factor which acts as a transcriptional repressor. May also function as a transcriptional activator. Binds to the palindromic T site 5'-TTCACACCTAGGTGTGAA-3' DNA sequence, or a half-site, which are present in the regulatory region of several genes. In Xenopus laevis (African clawed frog), this protein is T-box transcription factor TBX2-B (tbx2-b).